We begin with the raw amino-acid sequence, 377 residues long: Guanine nucleotide-binding protein subunit alpha-13 (377 aa).

Residues cysteine 14 and cysteine 18 are each lipidated (S-palmitoyl cysteine). In terms of domain architecture, G-alpha spans 47–377 (RLVKILLLGA…HDNLKQLMLQ (331 aa)). The G1 motif stretch occupies residues 50 to 63 (KILLLGAGESGKST). Residues 58-63 (ESGKST), serine 173, and 197-200 (LLAR) each bind GTP. Position 62 (serine 62) interacts with Mg(2+). A G2 motif region spans residues 195 to 203 (DILLARRPT). Residue threonine 203 coordinates Mg(2+). The residue at position 203 (threonine 203) is a Phosphothreonine; by PKA. Residues 218-227 (FKMVDVGGQR) form a G3 motif region. Positions 287-294 (ILFLNKTD) are G4 motif. GTP is bound by residues 291 to 294 (NKTD) and alanine 349. The tract at residues 347-352 (TTAINT) is G5 motif.

Belongs to the G-alpha family. G(12) subfamily. G proteins are composed of 3 units; alpha, beta and gamma. The alpha chain contains the guanine nucleotide binding site. Interacts with UBXD5. Interacts with HAX1. Interacts (in GTP-bound form) with PPP5C (via TPR repeats); activates PPP5C phosphatase activity and translocates PPP5C to the cell membrane. Interacts with RGS22. Interacts with ARHGEF1. Interacts (in GTP-bound form) with ARHGEF11 (via RGS domain). Interacts (in GTP-bound form) with ARHGEF12 (via RGS domain). Interacts (in GTP-bound form) with CTNND1. Interacts with GAS2L2. Interacts with GPR35. Interacts with GPR174. In terms of processing, palmitoylation is critical for proper membrane localization and signaling. Phosphorylation on Thr-203 by PKA destabilizes the heterotrimer of alpha, beta and gamma, and inhibits Rho activation.

Its subcellular location is the membrane. The protein localises to the melanosome. It is found in the cytoplasm. The protein resides in the nucleus. In terms of biological role, guanine nucleotide-binding proteins (G proteins) are involved as modulators or transducers in various transmembrane signaling systems. Activates effector molecule RhoA by binding and activating RhoGEFs (ARHGEF1/p115RhoGEF, ARHGEF11/PDZ-RhoGEF and ARHGEF12/LARG). GNA13-dependent Rho signaling subsequently regulates transcription factor AP-1 (activating protein-1). Promotes tumor cell invasion and metastasis by activating RhoA/ROCK signaling pathway. Inhibits CDH1-mediated cell adhesion in process independent from Rho activation. In lymphoid follicles, transmits P2RY8- and S1PR2-dependent signals that lead to inhibition of germinal center (GC) B cell growth and migration outside the GC niche. The chain is Guanine nucleotide-binding protein subunit alpha-13 (Gna13) from Rattus norvegicus (Rat).